The following is a 236-amino-acid chain: Leucyl/phenylalanyl-tRNA--protein transferase (236 aa).

The protein belongs to the L/F-transferase family.

Its subcellular location is the cytoplasm. It catalyses the reaction N-terminal L-lysyl-[protein] + L-leucyl-tRNA(Leu) = N-terminal L-leucyl-L-lysyl-[protein] + tRNA(Leu) + H(+). It carries out the reaction N-terminal L-arginyl-[protein] + L-leucyl-tRNA(Leu) = N-terminal L-leucyl-L-arginyl-[protein] + tRNA(Leu) + H(+). The enzyme catalyses L-phenylalanyl-tRNA(Phe) + an N-terminal L-alpha-aminoacyl-[protein] = an N-terminal L-phenylalanyl-L-alpha-aminoacyl-[protein] + tRNA(Phe). Functionally, functions in the N-end rule pathway of protein degradation where it conjugates Leu, Phe and, less efficiently, Met from aminoacyl-tRNAs to the N-termini of proteins containing an N-terminal arginine or lysine. The chain is Leucyl/phenylalanyl-tRNA--protein transferase from Vibrio atlanticus (strain LGP32) (Vibrio splendidus (strain Mel32)).